Reading from the N-terminus, the 637-residue chain is 1-deoxy-D-xylulose-5-phosphate synthase (637 aa).

Thiamine diphosphate contacts are provided by residues H73 and 113-115; that span reads SHA. Position 145 (D145) interacts with Mg(2+). Residues 146-147, N175, Y286, and E367 contribute to the thiamine diphosphate site; that span reads GA. N175 serves as a coordination point for Mg(2+).

It belongs to the transketolase family. DXPS subfamily. In terms of assembly, homodimer. It depends on Mg(2+) as a cofactor. The cofactor is thiamine diphosphate.

It carries out the reaction D-glyceraldehyde 3-phosphate + pyruvate + H(+) = 1-deoxy-D-xylulose 5-phosphate + CO2. It participates in metabolic intermediate biosynthesis; 1-deoxy-D-xylulose 5-phosphate biosynthesis; 1-deoxy-D-xylulose 5-phosphate from D-glyceraldehyde 3-phosphate and pyruvate: step 1/1. Functionally, catalyzes the acyloin condensation reaction between C atoms 2 and 3 of pyruvate and glyceraldehyde 3-phosphate to yield 1-deoxy-D-xylulose-5-phosphate (DXP). The polypeptide is 1-deoxy-D-xylulose-5-phosphate synthase (Thermobifida fusca (strain YX)).